A 130-amino-acid chain; its full sequence is Small ribosomal subunit protein uS11c (130 aa).

This sequence belongs to the universal ribosomal protein uS11 family. Part of the 30S ribosomal subunit.

It is found in the plastid. The protein resides in the chloroplast. In Oedogonium cardiacum (Filamentous green alga), this protein is Small ribosomal subunit protein uS11c.